Consider the following 232-residue polypeptide: 2,3,4,5-tetrahydropyridine-2,6-dicarboxylate N-acetyltransferase (232 aa).

Belongs to the transferase hexapeptide repeat family. DapH subfamily.

It carries out the reaction (S)-2,3,4,5-tetrahydrodipicolinate + acetyl-CoA + H2O = L-2-acetamido-6-oxoheptanedioate + CoA. Its pathway is amino-acid biosynthesis; L-lysine biosynthesis via DAP pathway; LL-2,6-diaminopimelate from (S)-tetrahydrodipicolinate (acetylase route): step 1/3. Its function is as follows. Catalyzes the transfer of an acetyl group from acetyl-CoA to tetrahydrodipicolinate. This is 2,3,4,5-tetrahydropyridine-2,6-dicarboxylate N-acetyltransferase from Streptococcus pneumoniae (strain CGSP14).